The primary structure comprises 336 residues: Abasic site processing protein HMCES (336 aa).

Cysteine 2 functions as the Nucleophile in the catalytic mechanism. Cysteine 2 is modified (thiazolidine linkage to a ring-opened DNA abasic site). Positions 26-51 (RQKCPKWRDGDTDKYQPSYNKSPQSN) are disordered. The segment covering 40–51 (YQPSYNKSPQSN) has biased composition (polar residues). Glutamate 129 is a catalytic residue. Residues 285–336 (QNKSPKKEESRSIIQSPKLSQFGAPPKKTSAGLMQQWLKKEDGEPSPKRAKK) form a disordered region. Positions 322-336 (LKKEDGEPSPKRAKK) are enriched in basic and acidic residues.

The protein belongs to the SOS response-associated peptidase family. Post-translationally, ubiquitination of the hmces DNA-protein cross-link by rfwd3 may promotes its degradation.

It localises to the chromosome. Formation and reversal of DNA-protein cross-link depends on DNA context. Catalyzes formation of the thiazolidine linkage in presence of abasic sites in single-stranded DNA. Mediates the reversal of the thiazolidine cross-link in presence of double stranded DNA. Its function is as follows. Sensor of abasic sites in single-stranded DNA (ssDNA) required to preserve genome integrity by promoting error-free repair of abasic sites. Acts as an enzyme that recognizes and binds abasic sites in ssDNA at replication forks and chemically modifies the lesion by forming a covalent cross-link with DNA: forms a stable thiazolidine linkage between a ring-opened abasic site and the alpha-amino and sulfhydryl substituents of its N-terminal catalytic cysteine residue. The hmces DNA-protein cross-link is then either reversed or degraded. Hmces is able to catalyze the reversal of its thiazolidine cross-link and cycle between a cross-link and a non-cross-linked state depending on DNA context: mediates self-reversal of the thiazolidine cross-link in double stranded DNA, allowing apex1 to initiate downstream repair of abasic sites. The hmces DNA-protein cross-link can also be degraded by the sprtn metalloprotease following unfolding by the brip1/fancj helicase. Promotes error-free repair of abasic sites by protecting abasic sites from translesion synthesis (TLS) polymerases and endonucleases that are error-prone and would generate mutations and double-strand breaks. Acts as a protease: mediates autocatalytic processing of its N-terminal methionine in order to expose the catalytic cysteine. The HMCES DNA-protein cross-link is then either reversed or degraded. According to a model, the HMCES DNA-protein cross-link. This is Abasic site processing protein HMCES from Xenopus laevis (African clawed frog).